Here is a 555-residue protein sequence, read N- to C-terminus: Glutamine--tRNA ligase (555 aa).

Positions 34–44 (PEPNGYLHIGH) match the 'HIGH' region motif. ATP-binding positions include 35–37 (EPN) and 41–47 (HIGHAKS). Positions 67 and 212 each coordinate L-glutamine. Residues Thr231, 261–262 (RL), and 269–271 (MSK) each bind ATP. Residues 268-272 (VMSKR) carry the 'KMSKS' region motif. Positions 317–324 (TKQDNTIE) are interaction with tRNA.

The protein belongs to the class-I aminoacyl-tRNA synthetase family. Monomer.

It is found in the cytoplasm. The enzyme catalyses tRNA(Gln) + L-glutamine + ATP = L-glutaminyl-tRNA(Gln) + AMP + diphosphate. This Salmonella choleraesuis (strain SC-B67) protein is Glutamine--tRNA ligase.